The primary structure comprises 460 residues: Omega-3 fatty acid desaturase, chloroplastic (460 aa).

Positions histidine 177–histidine 181 match the Histidine box-1 motif. The Histidine box-2 signature appears at histidine 213–histidine 217. Positions histidine 380–histidine 384 match the Histidine box-3 motif.

Belongs to the fatty acid desaturase type 1 family.

The protein resides in the plastid. The protein localises to the chloroplast membrane. Its pathway is lipid metabolism; polyunsaturated fatty acid biosynthesis. Functionally, chloroplast omega-3 fatty acid desaturase introduces the third double bond in the biosynthesis of 16:3 and 18:3 fatty acids, important constituents of plant membranes. It is thought to use ferredoxin as an electron donor and to act on fatty acids esterified to galactolipids, sulfolipids and phosphatidylglycerol. In Ricinus communis (Castor bean), this protein is Omega-3 fatty acid desaturase, chloroplastic (FAD7A-1).